The following is a 203-amino-acid chain: dITP/XTP pyrophosphatase (203 aa).

Substrate is bound at residue 8 to 13 (TANKGK). The Mg(2+) site is built by glutamate 41 and aspartate 70. Aspartate 70 functions as the Proton acceptor in the catalytic mechanism. Substrate contacts are provided by residues serine 71, 153-156 (FGYD), lysine 176, and 181-182 (HR).

The protein belongs to the HAM1 NTPase family. As to quaternary structure, homodimer. Mg(2+) is required as a cofactor.

The enzyme catalyses XTP + H2O = XMP + diphosphate + H(+). The catalysed reaction is dITP + H2O = dIMP + diphosphate + H(+). It carries out the reaction ITP + H2O = IMP + diphosphate + H(+). Functionally, pyrophosphatase that catalyzes the hydrolysis of nucleoside triphosphates to their monophosphate derivatives, with a high preference for the non-canonical purine nucleotides XTP (xanthosine triphosphate), dITP (deoxyinosine triphosphate) and ITP. Seems to function as a house-cleaning enzyme that removes non-canonical purine nucleotides from the nucleotide pool, thus preventing their incorporation into DNA/RNA and avoiding chromosomal lesions. The polypeptide is dITP/XTP pyrophosphatase (Listeria monocytogenes serotype 4b (strain F2365)).